A 496-amino-acid chain; its full sequence is Probable serine/threonine-protein kinase DDB_G0284251 (496 aa).

Low complexity predominate over residues 1–13 (MIEINNNHNNGNG). Positions 1–25 (MIEINNNHNNGNGKQFPSSQIMPDS) are disordered. Residues 36–288 (YTLGEKIGRG…AQELLQHPIF (253 aa)) form the Protein kinase domain. ATP is bound by residues 42 to 50 (IGRGAFGQV) and lysine 65. Aspartate 158 functions as the Proton acceptor in the catalytic mechanism. A disordered region spans residues 323–345 (DWGSSSSTSGSSTPLSSSSSSSN). The stretch at 353–386 (EDFNKLQTTIKQQAQTISNLSEEILILKKELKEK) forms a coiled coil. Residues 454–496 (PQLTPSSSRENISLSNSSSSIPNPNQNQNQNNKSKSKKFGFFS) are disordered. Positions 458–486 (PSSSRENISLSNSSSSIPNPNQNQNQNNK) are enriched in low complexity. Residues 487-496 (SKSKKFGFFS) show a composition bias toward basic residues.

It belongs to the protein kinase superfamily. STE Ser/Thr protein kinase family. Mg(2+) serves as cofactor.

It catalyses the reaction L-seryl-[protein] + ATP = O-phospho-L-seryl-[protein] + ADP + H(+). It carries out the reaction L-threonyl-[protein] + ATP = O-phospho-L-threonyl-[protein] + ADP + H(+). This chain is Probable serine/threonine-protein kinase DDB_G0284251, found in Dictyostelium discoideum (Social amoeba).